The chain runs to 605 residues: MSSEAPIALLSVYDKTGLLPFAKSLKELGFRLLGSGGTAKMIREAGMEIEDVSNITKAPEMLGGRVKTLHPAVHGGILSRDIPSDLADLATNKISPITLVVCNLYPFVLQTAKPDCTLAGAIEEIDIGGVTLLRAAAKNHGRVSIISSPSDYETIVAELRAKGEVSAETRRGLAIKAFEDTKSYDEAISDYFRKVYATPGVEEEMKAGAGVGYQRLGLRYGANPHQKPAQAFVEQGEMPIKVLSGSPGYINLLDALNSWALVKELAAGLDLPAAASFKHVSPAGAAVGLPLDERAAKVFGVEDLKELSPLACAYARARGADRMSSFGDFIALSHTVDTPTAKIISREVSDGVIAPGYEPEALEILSKKKGGKYCVLQMDPTYVPPEIETRQVYGISLQQKRNDCKIDESLFKNVVTANKDLPKSAVTDLVVATLALKYTQSNSVCYALNGTVIGLGAGQQSRIHCTRLAGDKADNWWLRHHPRVLELPFKKGTKRADKANAIDLFVTGQAFEAEGGERAQWESLFETVPEPLTKEEREKHMKELTGVACASDAFFPFPDNVHRAKRSGATYLAAPSGSIMDKECIKAADESNLVFCHTDLRLFHH.

The MGS-like domain occupies 1–147; it reads MSSEAPIALL…KNHGRVSIIS (147 aa). IMP-binding positions include 35-38, 65-68, 102-103, and 126-127; these read SGGT, RVKT, CN, and DI. Catalysis depends on Lys138, which acts as the Proton donor/acceptor; for FAICAR cyclization activity. 5-amino-1-(5-phospho-beta-D-ribosyl)imidazole-4-carboxamide contacts are provided by residues 219–220, His279, Gly327, Asp350, Asn442, and Arg462; that span reads RY. The Proton acceptor; for AICAR formyltransferase activity role is filled by His279. Ile463 provides a ligand contact to (6R)-10-formyltetrahydrofolate. Phe554 provides a ligand contact to 5-amino-1-(5-phospho-beta-D-ribosyl)imidazole-4-carboxamide. Asp559 provides a ligand contact to (6R)-10-formyltetrahydrofolate. Arg601 lines the 5-amino-1-(5-phospho-beta-D-ribosyl)imidazole-4-carboxamide pocket.

It belongs to the PurH family. As to quaternary structure, homodimer.

The protein resides in the cytoplasm. It localises to the cytosol. It catalyses the reaction (6R)-10-formyltetrahydrofolate + 5-amino-1-(5-phospho-beta-D-ribosyl)imidazole-4-carboxamide = 5-formamido-1-(5-phospho-D-ribosyl)imidazole-4-carboxamide + (6S)-5,6,7,8-tetrahydrofolate. The enzyme catalyses IMP + H2O = 5-formamido-1-(5-phospho-D-ribosyl)imidazole-4-carboxamide. Its pathway is purine metabolism; IMP biosynthesis via de novo pathway; 5-formamido-1-(5-phospho-D-ribosyl)imidazole-4-carboxamide from 5-amino-1-(5-phospho-D-ribosyl)imidazole-4-carboxamide (10-formyl THF route): step 1/1. The protein operates within purine metabolism; IMP biosynthesis via de novo pathway; IMP from 5-formamido-1-(5-phospho-D-ribosyl)imidazole-4-carboxamide: step 1/1. Bifunctional enzyme that catalyzes the last two steps of purine biosynthesis. Acts as a transformylase that incorporates a formyl group to the AMP analog AICAR (5-amino-1-(5-phospho-beta-D-ribosyl)imidazole-4-carboxamide) to produce the intermediate formyl-AICAR (FAICAR). Also catalyzes the cyclization of FAICAR to IMP. The sequence is that of Bifunctional purine biosynthesis protein ADE16 from Cryptococcus neoformans var. grubii serotype A (strain H99 / ATCC 208821 / CBS 10515 / FGSC 9487) (Filobasidiella neoformans var. grubii).